Here is a 170-residue protein sequence, read N- to C-terminus: Photosystem I assembly protein Ycf3 (170 aa).

TPR repeat units lie at residues 35–68 (AFTYYRDGMSAQAEGEYAEALQNYYEAMRLEVDA), 72–105 (SYILYNIGLIHTSNGEHGRALEYYYQALERNPSL), and 120–153 (GEQAIENGQSEISQILFEKAADYWKEAIRLAPTN).

Belongs to the Ycf3 family.

It localises to the plastid. Its subcellular location is the chloroplast thylakoid membrane. Essential for the assembly of the photosystem I (PSI) complex. May act as a chaperone-like factor to guide the assembly of the PSI subunits. The polypeptide is Photosystem I assembly protein Ycf3 (Tetradesmus obliquus (Green alga)).